A 29-amino-acid polypeptide reads, in one-letter code: PSSQPRGDPTGQEEPKKKVEKKTTTDPFD.

Residues Pro1–Asp29 form a disordered region. A Cell attachment site motif is present at residues Arg6 to Asp8. Residues Glu13–Asp29 are compositionally biased toward basic and acidic residues.

The protein belongs to the lentiviruses Tat family. In terms of assembly, interacts with host CCNT1. Associates with the P-TEFb complex composed at least of Tat, P-TEFb (CDK9 and CCNT1), TAR RNA, RNA Pol II. Recruits the HATs CREBBP, TAF1/TFIID, EP300, PCAF and GCN5L2. Interacts with host KAT5/Tip60; this interaction targets the latter to degradation. Interacts with the host deacetylase SIRT1. Interacts with host capping enzyme RNGTT; this interaction stimulates RNGTT. Binds to host KDR, and to the host integrins ITGAV/ITGB3 and ITGA5/ITGB1. Interacts with host KPNB1/importin beta-1 without previous binding to KPNA1/importin alpha-1. Interacts with EIF2AK2. Interacts with host nucleosome assembly protein NAP1L1; this interaction may be required for the transport of Tat within the nucleus, since the two proteins interact at the nuclear rim. Interacts with host C1QBP/SF2P32; this interaction involves lysine-acetylated Tat. Interacts with the host chemokine receptors CCR2, CCR3 and CXCR4. Interacts with host DPP4/CD26; this interaction may trigger an anti-proliferative effect. Interacts with host LDLR. Interacts with the host extracellular matrix metalloproteinase MMP1. Interacts with host PRMT6; this interaction mediates Tat's methylation. Interacts with, and is ubiquitinated by MDM2/Hdm2. Interacts with host PSMC3 and HTATIP2. Interacts with STAB1; this interaction may overcome SATB1-mediated repression of IL2 and IL2RA (interleukin) in T cells by binding to the same domain than HDAC1. Interacts (when acetylated) with human CDK13, thereby increasing HIV-1 mRNA splicing and promoting the production of the doubly spliced HIV-1 protein Nef. Acetylation by EP300, CREBBP, GCN5L2/GCN5 and PCAF regulates the transactivation activity of Tat. In terms of processing, phosphorylated by EIF2AK2 on serine and threonine residues adjacent to the basic region important for TAR RNA binding and function. Phosphorylation of Tat by EIF2AK2 is dependent on the prior activation of EIF2AK2 by dsRNA. Post-translationally, asymmetrical arginine methylation by host PRMT6 seems to diminish the transactivation capacity of Tat and affects the interaction with host CCNT1. Polyubiquitination by MDM2 does not target Tat to degradation, but activates its transactivation function and fosters interaction with CCNT1 and TAR RNA.

Its subcellular location is the host nucleus. It localises to the host nucleolus. The protein resides in the host cytoplasm. It is found in the secreted. Transcriptional activator that increases RNA Pol II processivity, thereby increasing the level of full-length viral transcripts. Recognizes a hairpin structure at the 5'-LTR of the nascent viral mRNAs referred to as the transactivation responsive RNA element (TAR) and recruits the cyclin T1-CDK9 complex (P-TEFb complex) that will in turn hyperphosphorylate the RNA polymerase II to allow efficient elongation. The CDK9 component of P-TEFb and other Tat-activated kinases hyperphosphorylate the C-terminus of RNA Pol II that becomes stabilized and much more processive. Other factors such as HTATSF1/Tat-SF1, SUPT5H/SPT5, and HTATIP2 are also important for Tat's function. Besides its effect on RNA Pol II processivity, Tat induces chromatin remodeling of proviral genes by recruiting the histone acetyltransferases (HATs) CREBBP, EP300 and PCAF to the chromatin. This also contributes to the increase in proviral transcription rate, especially when the provirus integrates in transcriptionally silent region of the host genome. To ensure maximal activation of the LTR, Tat mediates nuclear translocation of NF-kappa-B by interacting with host RELA. Through its interaction with host TBP, Tat may also modulate transcription initiation. Tat can reactivate a latently infected cell by penetrating in it and transactivating its LTR promoter. In the cytoplasm, Tat is thought to act as a translational activator of HIV-1 mRNAs. In terms of biological role, extracellular circulating Tat can be endocytosed by surrounding uninfected cells via the binding to several surface receptors such as CD26, CXCR4, heparan sulfate proteoglycans (HSPG) or LDLR. Neurons are rarely infected, but they internalize Tat via their LDLR. Endosomal low pH allows Tat to cross the endosome membrane to enter the cytosol and eventually further translocate into the nucleus, thereby inducing severe cell dysfunctions ranging from cell activation to cell death. Through its interaction with nuclear HATs, Tat is potentially able to control the acetylation-dependent cellular gene expression. Tat seems to inhibit the HAT activity of KAT5/Tip60 and TAF1, and consequently modify the expression of specific cellular genes. Modulates the expression of many cellular genes involved in cell survival, proliferation or in coding for cytokines (such as IL10) or cytokine receptors. May be involved in the derepression of host interleukin IL2 expression. Mediates the activation of cyclin-dependent kinases and dysregulation of microtubule network. Tat plays a role in T-cell and neurons apoptosis. Tat induced neurotoxicity and apoptosis probably contribute to neuroAIDS. Host extracellular matrix metalloproteinase MMP1 cleaves Tat and decreases Tat's mediated neurotoxicity. Circulating Tat also acts as a chemokine-like and/or growth factor-like molecule that binds to specific receptors on the surface of the cells, affecting many cellular pathways. In the vascular system, Tat binds to ITGAV/ITGB3 and ITGA5/ITGB1 integrins dimers at the surface of endothelial cells and competes with bFGF for heparin-binding sites, leading to an excess of soluble bFGF. Binds to KDR/VEGFR-2. All these Tat-mediated effects enhance angiogenesis in Kaposi's sarcoma lesions. This is Protein Tat from Homo sapiens (Human).